The chain runs to 413 residues: Sulfoquinovose isomerase (413 aa).

5 residues coordinate 6-sulfo-beta-D-quinovose: Arg-55, Tyr-111, Asn-172, His-176, and Arg-238. His-248 functions as the Proton donor/acceptor in the catalytic mechanism. 4 residues coordinate 6-sulfo-beta-D-quinovose: Glu-251, Gln-362, Gln-379, and His-383. Residue His-383 is the Proton donor/acceptor of the active site.

This sequence belongs to the N-acylglucosamine 2-epimerase family. In terms of assembly, homohexamer.

It catalyses the reaction 6-sulfo-beta-D-quinovose = 6-deoxy-6-sulfo-D-fructose. It carries out the reaction 6-sulfo-beta-D-quinovose = 6-sulfo-D-rhamnose. Its activity is regulated as follows. Significantly inhibited by Cu(2+), Fe(3+) and Co(2+). Partially inhibited by Mg(2+), Ca(2+) and Mn(2+). Also inhibited by ATP, ADP, dATP, TTP and GTP. Catalyzes the isomerization of sulfoquinovose (SQ) to 6-deoxy-6-sulfo-D-fructose (SF). Can also catalyze the interconversion of SQ and sulforhamnose (SR). Has a clear preference for beta-SQ and little-to-no activity on alpha-SQ. In vitro, can also catalyze the interconversion of mannose, fructose and glucose, or lyxose and xylulose, but has extremely low activity with glucose. The sequence is that of Sulfoquinovose isomerase (yihS) from Escherichia coli (strain K12).